Reading from the N-terminus, the 309-residue chain is Formate-nitrite transporter (309 aa).

Residues 1–19 are Cytoplasmic-facing; it reads MPPNNSKYVLDPVSIKSVC. Residues 20-35 constitute an intramembrane region (helical); it reads GGEESYIRCVEYGKKK. Residues 36–40 are Cytoplasmic-facing; the sequence is AHYSN. Residues 41 to 68 traverse the membrane as a helical segment; sequence LNLLAKAILAGMFVGLCAHASGIAGGLF. The Extracellular segment spans residues 69–79; it reads YYHKLREIVGA. A helical transmembrane segment spans residues 80-100; it reads SMSVFVYGFTFPIAFMCIICT. Topologically, residues 101–122 are cytoplasmic; it reads GSDLFTGNTLAVTMALYEKKVK. The helical transmembrane segment at 123 to 150 threads the bilayer; sequence LLDYLRVMTISLFGNYVGAVSFAFFVSY. Over 151-163 the chain is Extracellular; it reads LSGAFTNVHAVEK. Residues 164–179 constitute an intramembrane region (helical); it reads NHFFQFLNDIAEKKVH. The Extracellular segment spans residues 180–181; it reads HT. The helical transmembrane segment at 182–206 threads the bilayer; the sequence is FVECVSLAVGCNIFVCLAVYFVLTL. Residues 207–209 are Cytoplasmic-facing; the sequence is KDG. A helical transmembrane segment spans residues 210–226; that stretch reads AGYVFSVFFAVYAFAIA. Residues 227 to 249 are Extracellular-facing; sequence GYEHIIANIYTLNIALMVNTKIT. The helical transmembrane segment at 250–280 threads the bilayer; that stretch reads VYQAYIKNLLPTLLGNYIAGAIVLGLPLYFI. Over 281 to 309 the chain is Cytoplasmic; the sequence is YKEHYYNFERSKRDNNDAQMKSLSIELRN.

It belongs to the FNT transporter (TC 1.A.16) family. In terms of assembly, homopentamer.

It is found in the cell membrane. Its subcellular location is the vacuole membrane. The enzyme catalyses (S)-lactate(in) + H(+)(in) = (S)-lactate(out) + H(+)(out). It catalyses the reaction formate(in) + H(+)(in) = formate(out) + H(+)(out). The catalysed reaction is pyruvate(out) + H(+)(out) = pyruvate(in) + H(+)(in). It carries out the reaction acetate(out) + H(+)(out) = acetate(in) + H(+)(in). With respect to regulation, inhibited by diethylpyrocarbonate (DEPC). Protonophores, such as 2,4-dinitrophenol and carbonylcyanide-3-chlorophenylhydrazone, abolish transport. Inhibited by phloretin, furosemide, alpha-cyano-4-hydroxy-cinnamate and alpha-fluorocinnamate. Inhibited by the Malaria Box compound MMV007839 and its derivatives BH296 and BH267.meta. Inhibited by the Malaria Box compound MMV000972. Inhibited by broad-specificity anion transport inhibitor NPPB. Functionally, monocarboxylate-proton symporter that mediates the efflux of the waste product lactate in the intraerythrocytic parasites; active in acidic-to-neutral pH range. Transports L-lactate. Transports D-lactate, pyruvate, acetate and formate. Essential for asexual growth but dispensable for the development of gametocytes. In Plasmodium falciparum (isolate 3D7), this protein is Formate-nitrite transporter.